Consider the following 220-residue polypeptide: Deoxyribose-phosphate aldolase (220 aa).

D92 serves as the catalytic Proton donor/acceptor. The Schiff-base intermediate with acetaldehyde role is filled by K155. Residue K184 is the Proton donor/acceptor of the active site.

This sequence belongs to the DeoC/FbaB aldolase family. DeoC type 1 subfamily.

The protein resides in the cytoplasm. The catalysed reaction is 2-deoxy-D-ribose 5-phosphate = D-glyceraldehyde 3-phosphate + acetaldehyde. Its pathway is carbohydrate degradation; 2-deoxy-D-ribose 1-phosphate degradation; D-glyceraldehyde 3-phosphate and acetaldehyde from 2-deoxy-alpha-D-ribose 1-phosphate: step 2/2. Functionally, catalyzes a reversible aldol reaction between acetaldehyde and D-glyceraldehyde 3-phosphate to generate 2-deoxy-D-ribose 5-phosphate. The chain is Deoxyribose-phosphate aldolase from Symbiobacterium thermophilum (strain DSM 24528 / JCM 14929 / IAM 14863 / T).